The following is a 564-amino-acid chain: E3 ubiquitin-protein ligase hrd-like protein 1 (564 aa).

The helical transmembrane segment at 17-37 (SYLALSVLVAIVASVTVFTTF) threads the bilayer. The N-linked (GlcNAc...) asparagine glycan is linked to N53. 7 consecutive transmembrane segments (helical) span residues 61 to 81 (YGLNIEALSGHTFFQIAHYIL), 86 to 106 (LIWVAINSYFAILAVCTRLII), 123 to 143 (QAFFCYVLLTIVYLSVVIGPQ), 148 to 168 (VMPWMIWGGICAFLSHLQFIT), 185 to 205 (KISFLSLFLFFVSIAMTFLIS), 215 to 235 (PAVLLYFDCLLAVFRSTYILF), and 272 to 292 (LSFAQLLAFSPGLNLTSIFFL). An RING-type; atypical zinc finger spans residues 335–373 (CVVCWELLGTSRRLPCSHQFHDWCLMWWLAQDSSCPTCR). Positions 432–474 (QLQTMLEQVREMFPQMSVDIIMTDLRQSGSAQSTIENILEGRI) constitute a CUE domain.

The protein resides in the membrane. Proposed to have a role in neuroprotection. This Caenorhabditis elegans protein is E3 ubiquitin-protein ligase hrd-like protein 1 (hrdl-1).